The sequence spans 292 residues: Glycine--tRNA ligase alpha subunit (292 aa).

The protein belongs to the class-II aminoacyl-tRNA synthetase family. Tetramer of two alpha and two beta subunits.

The protein localises to the cytoplasm. It carries out the reaction tRNA(Gly) + glycine + ATP = glycyl-tRNA(Gly) + AMP + diphosphate. In Synechococcus elongatus (strain ATCC 33912 / PCC 7942 / FACHB-805) (Anacystis nidulans R2), this protein is Glycine--tRNA ligase alpha subunit.